The primary structure comprises 785 residues: Penicillin-binding protein 1A (785 aa).

The segment at 1–61 is disordered; it reads MPPDDRLTAV…SGPGGPSGPG (61 aa). Pro residues predominate over residues 33–45; sequence SPPPKPPPPPPPG. The segment covering 46-59 has biased composition (gly residues); the sequence is RGGGGPSGPGGPSG. Residues 77–97 traverse the membrane as a helical segment; the sequence is IAVAVMVLLPLITFGMAYMIV. Residues 118–299 form a transglycosylase region; sequence GSEIARIVPP…RWNWVLDGMV (182 aa). Glutamate 151 (proton donor; for transglycosylase activity) is an active-site residue. The interval 392 to 662 is transpeptidase; sequence AVVSIDPRTG…EGVKPLVNKW (271 aa). Serine 426 functions as the Acyl-ester intermediate; for transpeptidase activity in the catalytic mechanism. Disordered stretches follow at residues 605 to 626, 690 to 726, and 738 to 785; these read SRGH…VQLG, ESFP…QPSV, and GITI…PPPP. 2 stretches are compositionally biased toward pro residues: residues 708–721 and 743–758; these read PAAP…PTDP and IGPP…PGAP. Residues 759–775 are compositionally biased toward low complexity; the sequence is GAPVGPGAPEVPVAPGA.

Its subcellular location is the cell membrane. It catalyses the reaction [GlcNAc-(1-&gt;4)-Mur2Ac(oyl-L-Ala-gamma-D-Glu-L-Lys-D-Ala-D-Ala)](n)-di-trans,octa-cis-undecaprenyl diphosphate + beta-D-GlcNAc-(1-&gt;4)-Mur2Ac(oyl-L-Ala-gamma-D-Glu-L-Lys-D-Ala-D-Ala)-di-trans,octa-cis-undecaprenyl diphosphate = [GlcNAc-(1-&gt;4)-Mur2Ac(oyl-L-Ala-gamma-D-Glu-L-Lys-D-Ala-D-Ala)](n+1)-di-trans,octa-cis-undecaprenyl diphosphate + di-trans,octa-cis-undecaprenyl diphosphate + H(+). The enzyme catalyses Preferential cleavage: (Ac)2-L-Lys-D-Ala-|-D-Ala. Also transpeptidation of peptidyl-alanyl moieties that are N-acyl substituents of D-alanine.. It participates in cell wall biogenesis; peptidoglycan biosynthesis. In terms of biological role, cell wall formation. Synthesis of cross-linked peptidoglycan from the lipid intermediates. The enzyme has a penicillin-insensitive transglycosylase N-terminal domain (formation of linear glycan strands) and a penicillin-sensitive transpeptidase C-terminal domain (cross-linking of the peptide subunits). This Mycolicibacterium smegmatis (strain ATCC 700084 / mc(2)155) (Mycobacterium smegmatis) protein is Penicillin-binding protein 1A (ponA1).